Consider the following 501-residue polypeptide: Phenylalanine--tRNA ligase alpha subunit (501 aa).

L-phenylalanine is bound by residues Thr344, 383-385 (QID), and Phe424. Glu426 is a binding site for Mg(2+). Phe449 provides a ligand contact to L-phenylalanine.

It belongs to the class-II aminoacyl-tRNA synthetase family. Phe-tRNA synthetase alpha subunit type 2 subfamily. As to quaternary structure, tetramer of two alpha and two beta subunits. Mg(2+) is required as a cofactor.

The protein resides in the cytoplasm. It catalyses the reaction tRNA(Phe) + L-phenylalanine + ATP = L-phenylalanyl-tRNA(Phe) + AMP + diphosphate + H(+). This is Phenylalanine--tRNA ligase alpha subunit from Thermococcus kodakarensis (strain ATCC BAA-918 / JCM 12380 / KOD1) (Pyrococcus kodakaraensis (strain KOD1)).